Reading from the N-terminus, the 376-residue chain is Succinyl-diaminopimelate desuccinylase (376 aa).

Residue His-67 coordinates Zn(2+). Residue Asp-69 is part of the active site. Asp-100 contributes to the Zn(2+) binding site. Glu-134 (proton acceptor) is an active-site residue. 3 residues coordinate Zn(2+): Glu-135, Glu-163, and His-349.

This sequence belongs to the peptidase M20A family. DapE subfamily. As to quaternary structure, homodimer. Zn(2+) serves as cofactor. Requires Co(2+) as cofactor.

The enzyme catalyses N-succinyl-(2S,6S)-2,6-diaminopimelate + H2O = (2S,6S)-2,6-diaminopimelate + succinate. It functions in the pathway amino-acid biosynthesis; L-lysine biosynthesis via DAP pathway; LL-2,6-diaminopimelate from (S)-tetrahydrodipicolinate (succinylase route): step 3/3. Functionally, catalyzes the hydrolysis of N-succinyl-L,L-diaminopimelic acid (SDAP), forming succinate and LL-2,6-diaminopimelate (DAP), an intermediate involved in the bacterial biosynthesis of lysine and meso-diaminopimelic acid, an essential component of bacterial cell walls. This is Succinyl-diaminopimelate desuccinylase from Actinobacillus succinogenes (strain ATCC 55618 / DSM 22257 / CCUG 43843 / 130Z).